The chain runs to 358 residues: Putative KilA-N domain-containing protein 313L (358 aa).

A KilA-N domain is found at 15–124 (NFYYGLFGDF…DKCNQIVIDF (110 aa)). Residues 126-245 (VVEFKEKEKE…VKLEISVEDR (120 aa)) are a coiled coil.

It belongs to the IIV-6 006L/238R/313L/468L family.

This chain is Putative KilA-N domain-containing protein 313L, found in Acheta domesticus (House cricket).